Reading from the N-terminus, the 393-residue chain is MPSRATVQEFSDSYPFCHNGFRPIMMPKIVSVQHSTRRHLTSFVGRKAELNDVRRLLSDKRLVTLTGPDGMGKSRLALQIGAQIAHEFTYGRWDCDLATVTDRDCVSISMLNALGLPVQPGLSAIDTLVGVINDARVLLVLDHCEHLLDACAAIIDSLLRSCPRLTILTTSTEAIGLAGELTWRVPPLSLTNDAIELFVDRARRVRSDFAINADTAVTVGEICRRLDGVPLAIELAAARTDTLSPVEILAGLNDRFRLVAGAAGNAVRPEQTLCATVQWSHALLSGPERALLHRLAVFAGGFDLDGAQAVGANDEDFEGYQTLGRFAELVDKAFVVVENNRGRAGYRLLYSVRQYALEKLSESGEADAVLARYRKHLKQPNQVVRAGSGGVRY.

67–74 (GPDGMGKS) serves as a coordination point for ATP.

This is an uncharacterized protein from Mycobacterium tuberculosis (strain CDC 1551 / Oshkosh).